The primary structure comprises 87 residues: Small ribosomal subunit protein bS20 (87 aa).

Residues 1–26 are disordered; it reads MANIKSAKKRAVQSEKRRKHNASRRS.

The protein belongs to the bacterial ribosomal protein bS20 family.

Binds directly to 16S ribosomal RNA. The protein is Small ribosomal subunit protein bS20 of Yersinia enterocolitica serotype O:8 / biotype 1B (strain NCTC 13174 / 8081).